We begin with the raw amino-acid sequence, 125 residues long: Large ribosomal subunit protein bL12 (125 aa).

In terms of assembly, homodimer. Part of the ribosomal stalk of the 50S ribosomal subunit. Forms a multimeric L10(L12)X complex, where L10 forms an elongated spine to which 2 to 4 L12 dimers bind in a sequential fashion. Binds GTP-bound translation factors. Post-translationally, two isoforms seem to exist. One is probably dimethylated on Lys-69 and monomethylated on Lys-86 while the other is probably acetylated or trimethylated on both Lys-86 and Lys-89.

Forms part of the ribosomal stalk which helps the ribosome interact with GTP-bound translation factors. Is thus essential for accurate translation. The polypeptide is Large ribosomal subunit protein bL12 (Rhodopseudomonas palustris (strain ATCC BAA-98 / CGA009)).